A 120-amino-acid polypeptide reads, in one-letter code: MAKYRAGRINEEVKKEVSNIIHNDIKDPRLSAMVSVTDVDVTKDLKYAKVYVSIFGNEKAKEESLQALKSSVGFIRKEIGRRVKLRNTPEVIIEVDNSIERGMHIDELLHSIKENESNDN.

The protein belongs to the RbfA family. As to quaternary structure, monomer. Binds 30S ribosomal subunits, but not 50S ribosomal subunits or 70S ribosomes.

The protein localises to the cytoplasm. Functionally, one of several proteins that assist in the late maturation steps of the functional core of the 30S ribosomal subunit. Associates with free 30S ribosomal subunits (but not with 30S subunits that are part of 70S ribosomes or polysomes). Required for efficient processing of 16S rRNA. May interact with the 5'-terminal helix region of 16S rRNA. The chain is Ribosome-binding factor A from Clostridium botulinum (strain Okra / Type B1).